A 249-amino-acid chain; its full sequence is uncharacterized protein (249 aa).

It localises to the cytoplasm. It is found in the nucleus. Its subcellular location is the nucleolus. This is an uncharacterized protein from Schizosaccharomyces pombe (strain 972 / ATCC 24843) (Fission yeast).